A 363-amino-acid polypeptide reads, in one-letter code: Probable L-tyrosine/L-aspartate decarboxylase (363 aa).

K208 bears the N6-(pyridoxal phosphate)lysine mark.

Belongs to the group II decarboxylase family. MfnA subfamily. Pyridoxal 5'-phosphate is required as a cofactor.

The catalysed reaction is L-tyrosine + H(+) = tyramine + CO2. It carries out the reaction L-aspartate + H(+) = beta-alanine + CO2. It functions in the pathway cofactor biosynthesis; methanofuran biosynthesis. Its pathway is cofactor biosynthesis; coenzyme A biosynthesis. Catalyzes the decarboxylation of L-tyrosine to produce tyramine for methanofuran biosynthesis. Can also catalyze the decarboxylation of L-aspartate to produce beta-alanine for coenzyme A (CoA) biosynthesis. The polypeptide is Probable L-tyrosine/L-aspartate decarboxylase (Methanothermobacter thermautotrophicus (strain ATCC 29096 / DSM 1053 / JCM 10044 / NBRC 100330 / Delta H) (Methanobacterium thermoautotrophicum)).